Here is a 200-residue protein sequence, read N- to C-terminus: Pyrrolidone-carboxylate peptidase (200 aa).

Residues Glu79, Cys142, and His166 contribute to the active site.

The protein belongs to the peptidase C15 family. Homotetramer.

It localises to the cytoplasm. The catalysed reaction is Release of an N-terminal pyroglutamyl group from a polypeptide, the second amino acid generally not being Pro.. Its function is as follows. Removes 5-oxoproline from various penultimate amino acid residues except L-proline. The protein is Pyrrolidone-carboxylate peptidase (pcp) of Pyrococcus abyssi (strain GE5 / Orsay).